A 448-amino-acid polypeptide reads, in one-letter code: UDP-N-acetylmuramoylalanine--D-glutamate ligase (448 aa).

Gly116–Thr122 lines the ATP pocket.

This sequence belongs to the MurCDEF family.

The protein resides in the cytoplasm. The catalysed reaction is UDP-N-acetyl-alpha-D-muramoyl-L-alanine + D-glutamate + ATP = UDP-N-acetyl-alpha-D-muramoyl-L-alanyl-D-glutamate + ADP + phosphate + H(+). The protein operates within cell wall biogenesis; peptidoglycan biosynthesis. In terms of biological role, cell wall formation. Catalyzes the addition of glutamate to the nucleotide precursor UDP-N-acetylmuramoyl-L-alanine (UMA). This chain is UDP-N-acetylmuramoylalanine--D-glutamate ligase, found in Pseudomonas fluorescens (strain Pf0-1).